The chain runs to 155 residues: uncharacterized protein (155 aa).

Residues 135–155 (SQANSKNDSNSKDDLPNPFSV) are disordered.

This is an uncharacterized protein from Acidianus convivator (ATV).